The chain runs to 152 residues: Sec-independent protein translocase protein TatB (152 aa).

Residues 1–21 (MFGISFSELLLVGLVALLVLG) form a helical membrane-spanning segment. The span at 98–115 (HAPGAATVAEAPPASEVP) shows a compositional bias: low complexity. The segment at 98-152 (HAPGAATVAEAPPASEVPAPLPSTPAPAPTAEPAAPVATPATTAPHDSTLPPRAP) is disordered. Residues 116–127 (APLPSTPAPAPT) are compositionally biased toward pro residues. Low complexity predominate over residues 128-142 (AEPAAPVATPATTAP).

It belongs to the TatB family. The Tat system comprises two distinct complexes: a TatABC complex, containing multiple copies of TatA, TatB and TatC subunits, and a separate TatA complex, containing only TatA subunits. Substrates initially bind to the TatABC complex, which probably triggers association of the separate TatA complex to form the active translocon.

It is found in the cell inner membrane. In terms of biological role, part of the twin-arginine translocation (Tat) system that transports large folded proteins containing a characteristic twin-arginine motif in their signal peptide across membranes. Together with TatC, TatB is part of a receptor directly interacting with Tat signal peptides. TatB may form an oligomeric binding site that transiently accommodates folded Tat precursor proteins before their translocation. This Pseudomonas fluorescens (strain ATCC BAA-477 / NRRL B-23932 / Pf-5) protein is Sec-independent protein translocase protein TatB.